Here is a 363-residue protein sequence, read N- to C-terminus: UDP-N-acetylglucosamine--N-acetylmuramyl-(pentapeptide) pyrophosphoryl-undecaprenol N-acetylglucosamine transferase (363 aa).

Residues 14-16 (TGG), N122, R163, S190, and Q285 each bind UDP-N-acetyl-alpha-D-glucosamine.

This sequence belongs to the glycosyltransferase 28 family. MurG subfamily.

Its subcellular location is the cell inner membrane. It catalyses the reaction di-trans,octa-cis-undecaprenyl diphospho-N-acetyl-alpha-D-muramoyl-L-alanyl-D-glutamyl-meso-2,6-diaminopimeloyl-D-alanyl-D-alanine + UDP-N-acetyl-alpha-D-glucosamine = di-trans,octa-cis-undecaprenyl diphospho-[N-acetyl-alpha-D-glucosaminyl-(1-&gt;4)]-N-acetyl-alpha-D-muramoyl-L-alanyl-D-glutamyl-meso-2,6-diaminopimeloyl-D-alanyl-D-alanine + UDP + H(+). It functions in the pathway cell wall biogenesis; peptidoglycan biosynthesis. Its function is as follows. Cell wall formation. Catalyzes the transfer of a GlcNAc subunit on undecaprenyl-pyrophosphoryl-MurNAc-pentapeptide (lipid intermediate I) to form undecaprenyl-pyrophosphoryl-MurNAc-(pentapeptide)GlcNAc (lipid intermediate II). In Prochlorococcus marinus (strain AS9601), this protein is UDP-N-acetylglucosamine--N-acetylmuramyl-(pentapeptide) pyrophosphoryl-undecaprenol N-acetylglucosamine transferase.